The primary structure comprises 346 residues: Phosphate acyltransferase (346 aa).

Belongs to the PlsX family. In terms of assembly, homodimer. Probably interacts with PlsY.

The protein localises to the cytoplasm. It catalyses the reaction a fatty acyl-[ACP] + phosphate = an acyl phosphate + holo-[ACP]. Its pathway is lipid metabolism; phospholipid metabolism. Catalyzes the reversible formation of acyl-phosphate (acyl-PO(4)) from acyl-[acyl-carrier-protein] (acyl-ACP). This enzyme utilizes acyl-ACP as fatty acyl donor, but not acyl-CoA. This Geobacter sulfurreducens (strain ATCC 51573 / DSM 12127 / PCA) protein is Phosphate acyltransferase.